The chain runs to 362 residues: Histidine protein methyltransferase 1 homolog (362 aa).

The tract at residues 18 to 88 (TSLDDGTCVL…EACKHQPSWK (71 aa)) is disordered. The segment covering 30–51 (QKGKQDKRQSTERPGLPRDHSW) has biased composition (basic and acidic residues). Over residues 52–65 (KCSSLGNAASSEDT) the composition is skewed to polar residues. Ser62 and Ser67 each carry phosphoserine. Residues 73–82 (DRSDDPEACK) show a composition bias toward basic and acidic residues. A Tele-methylhistidine modification is found at His144. S-adenosyl-L-methionine contacts are provided by residues 158–162 (IWECT), Gly185, and 206–208 (QDY). A Nuclear localization signal motif is present at residues 237–243 (PDGKRQR). S-adenosyl-L-methionine contacts are provided by residues 259–261 (GEW) and Ser283.

The protein belongs to the methyltransferase superfamily. METTL18 family. In terms of assembly, interacts with GRWD1 and members of the heat shock protein 90 and 70 families; these proteins may possibly be methylation substrates for the enzyme. Monomethylated at His-144 through automethylation. Automethylation at His-144 positively regulates the methyltransferase activity toward RPL3. Probably methylated on other residues.

Its subcellular location is the cytoplasm. The protein localises to the cytosol. It is found in the nucleus. The protein resides in the nucleolus. The catalysed reaction is L-histidyl-[protein] + S-adenosyl-L-methionine = N(tele)-methyl-L-histidyl-[protein] + S-adenosyl-L-homocysteine + H(+). In terms of biological role, protein-L-histidine N-tele-methyltransferase that specifically monomethylates RPL3, thereby regulating translation elongation. Histidine methylation of RPL3 regulates translation elongation by slowing ribosome traversal on tyrosine codons: slower elongation provides enough time for proper folding of synthesized proteins and prevents cellular aggregation of tyrosine-rich proteins. This is Histidine protein methyltransferase 1 homolog from Mus musculus (Mouse).